Here is a 197-residue protein sequence, read N- to C-terminus: Small ribosomal subunit protein uS4c (197 aa).

The S4 RNA-binding domain occupies 85–161 (MRLDNILFRL…TGKELANHLN (77 aa)).

This sequence belongs to the universal ribosomal protein uS4 family. In terms of assembly, part of the 30S ribosomal subunit. Contacts protein S5. The interaction surface between S4 and S5 is involved in control of translational fidelity.

The protein localises to the plastid. In terms of biological role, one of the primary rRNA binding proteins, it binds directly to 16S rRNA where it nucleates assembly of the body of the 30S subunit. Functionally, with S5 and S12 plays an important role in translational accuracy. The protein is Small ribosomal subunit protein uS4c (rps4) of Cuscuta obtusiflora (Peruvian dodder).